Reading from the N-terminus, the 402-residue chain is MNGGVQTWTQPRLCYLVKEGGSHGFSLKTVQGKKGVYMTDITPQGVAMRAGVLADDHLIEVNGENVEDASHEEVVEKVKKSGSRVMFLLVDKETDKRHVEQKIQFKRETASLKLLPHQPRIVEMKKGSNGYGFYLRAGSEQKGWGRVGQIIKDIDSGSPAEEAGLKNNDLVVAVNGESVETLDHDSVVEMIRKGGDQTSLLVVDKETDNMYRLAHFSPFLYYQSQELPNGSVKEAPAPTPTSLEVSSPPDTTEEEDHKPKLCRLAKGENGYGFHLNAIRGLPGSFIKEVQKGGPADLAGLEDEDVIIEVNGVNVLDEPYEKVVDRIQSSGKNVTLLVCGKKAYDYFQAKKIPIVSSLADPLDTPPDSKEGIVVESKHDSHMAKERAHSTASHSSSNSEDTEM.

2 PDZ domains span residues 12–93 and 121–206; these read RLCY…VDKE and IVEM…VDKE. A disordered region spans residues 230 to 258; the sequence is GSVKEAPAPTPTSLEVSSPPDTTEEEDHK. A compositionally biased stretch (polar residues) spans 240–250; sequence PTSLEVSSPPD. A PDZ 3 domain is found at 261–341; the sequence is LCRLAKGENG…NVTLLVCGKK (81 aa). The disordered stretch occupies residues 362-402; it reads DTPPDSKEGIVVESKHDSHMAKERAHSTASHSSSNSEDTEM. Positions 365–387 are enriched in basic and acidic residues; that stretch reads PDSKEGIVVESKHDSHMAKERAH. Low complexity predominate over residues 388-402; sequence STASHSSSNSEDTEM.

This sequence belongs to the NHER family.

In Homo sapiens (Human), this protein is Putative PDZ domain-containing protein PDZK1P1.